We begin with the raw amino-acid sequence, 457 residues long: Streptogrisin-C (457 aa).

The tat-type signal signal peptide spans 1–34 (MERTTLRRRALVAGTATVAVGALALAGLTGVASA). The propeptide occupies 35–202 (DPAATAAPPV…ARSAEQPRAL (168 aa)). Positions 203–393 (ADIRGGDAYY…QAYGLTLVTS (191 aa)) are catalytic. Cysteines 219 and 239 form a disulfide. Active-site charge relay system residues include His238 and Asp266. Intrachain disulfides connect Cys305/Cys315 and Cys341/Cys368. Ser347 serves as the catalytic Charge relay system. Residues 393-412 (SGGGTPTDPPTTPPTDSPGG) form a disordered region. Positions 394–413 (GGGTPTDPPTTPPTDSPGGT) are linker. Over residues 399–408 (TDPPTTPPTD) the composition is skewed to pro residues. A Chitin-binding type-3 domain is found at 415 to 457 (AVGTAYAAGATVTYGGATYRCLQAHTAQPGWTPADVPALWQRV).

The protein belongs to the peptidase S1 family. As to quaternary structure, monomer. Predicted to be exported by the Tat system. The position of the signal peptide cleavage has not been experimentally proven.

In terms of biological role, hydrolysis of proteins with specificity similar to chymotrypsin. May be specialized for the degradation of chitin-linked proteins. Has a primary specificity for large aliphatic or aromatic amino acids. The protein is Streptogrisin-C (sprC) of Streptomyces griseus.